Reading from the N-terminus, the 72-residue chain is DNA-directed RNA polymerase subunit Rpo10 (72 aa).

Zn(2+) is bound by residues Cys7, Cys10, Cys54, and Cys55.

This sequence belongs to the archaeal Rpo10/eukaryotic RPB10 RNA polymerase subunit family. Part of the RNA polymerase complex. It depends on Zn(2+) as a cofactor.

The protein localises to the cytoplasm. The catalysed reaction is RNA(n) + a ribonucleoside 5'-triphosphate = RNA(n+1) + diphosphate. Functionally, DNA-dependent RNA polymerase (RNAP) catalyzes the transcription of DNA into RNA using the four ribonucleoside triphosphates as substrates. The polypeptide is DNA-directed RNA polymerase subunit Rpo10 (Picrophilus torridus (strain ATCC 700027 / DSM 9790 / JCM 10055 / NBRC 100828 / KAW 2/3)).